A 308-amino-acid polypeptide reads, in one-letter code: Putative glutamine amidotransferase Rv2859c (308 aa).

The tract at residues 1–62 is disordered; that stretch reads MDLSASRSDG…ASPRLRSPLG (62 aa). 3 stretches are compositionally biased toward low complexity: residues 13 to 24, 31 to 42, and 49 to 61; these read PLRPASPRLRSP and PLRP…RSPL. The region spanning 78 to 301 is the Glutamine amidotransferase type-1 domain; it reads RTGVWDIPAG…VDAASGYAGR (224 aa). Residue Cys177 is the Nucleophile of the active site. Active-site residues include His277 and Glu279. Residue Lys289 forms an Isoglutamyl lysine isopeptide (Lys-Gln) (interchain with Q-Cter in protein Pup) linkage.

This chain is Putative glutamine amidotransferase Rv2859c, found in Mycobacterium tuberculosis (strain ATCC 25618 / H37Rv).